The sequence spans 103 residues: Small ribosomal subunit protein uS10 (103 aa).

It belongs to the universal ribosomal protein uS10 family. As to quaternary structure, part of the 30S ribosomal subunit.

In terms of biological role, involved in the binding of tRNA to the ribosomes. This Azoarcus sp. (strain BH72) protein is Small ribosomal subunit protein uS10.